The chain runs to 100 residues: Urease subunit gamma (100 aa).

This sequence belongs to the urease gamma subunit family. As to quaternary structure, heterotrimer of UreA (gamma), UreB (beta) and UreC (alpha) subunits. Three heterotrimers associate to form the active enzyme.

The protein localises to the cytoplasm. The enzyme catalyses urea + 2 H2O + H(+) = hydrogencarbonate + 2 NH4(+). Its pathway is nitrogen metabolism; urea degradation; CO(2) and NH(3) from urea (urease route): step 1/1. This is Urease subunit gamma from Edwardsiella ictaluri (strain 93-146).